A 1799-amino-acid chain; its full sequence is 1,3-beta-glucan synthase component FKS1 (1799 aa).

The span at 1 to 11 (MSYPNPPPPPK) shows a compositional bias: pro residues. The tract at residues 1–136 (MSYPNPPPPP…SNAGHRPRDP (136 aa)) is disordered. Residues 12–23 (GSASFSSSSSDP) show a composition bias toward low complexity. A compositionally biased stretch (gly residues) spans 51–64 (GAGGAGVAPPGQGG). The span at 91 to 101 (ASESGWSQNEP) shows a compositional bias: polar residues. 16 helical membrane passes run 431–451 (IWVL…PSIY), 470–490 (LGGF…FSYI), 504–524 (LIFL…IAFF), 530–550 (VALI…IAFA), 591–611 (FLLW…FLTL), 648–668 (VMFV…YVIW), 1268–1288 (NILV…LGTL), 1323–1343 (CIIS…VQEL), 1422–1442 (LVLL…YFWI), 1446–1466 (GLCV…DFII), 1527–1547 (IGEI…YLFI), 1563–1583 (IAII…TLFL), 1605–1625 (ALAH…LWFL), 1635–1655 (LGII…IAVF), 1704–1724 (DFIA…IPYF), and 1762–1782 (GLLY…PIIF).

Belongs to the glycosyltransferase 48 family. Component of the 1,3-beta-glucan synthase (GS) complex composed of a catalytic subunit FKS1 and a regulatory subunit RHO1.

It is found in the cell membrane. It catalyses the reaction [(1-&gt;3)-beta-D-glucosyl](n) + UDP-alpha-D-glucose = [(1-&gt;3)-beta-D-glucosyl](n+1) + UDP + H(+). Activated by magnesium ions. Inhibited by caspofungin and cilofungin. In terms of biological role, catalytic subunit of the 1,3-beta-glucan synthase (GS) complex. Synthesizes 1,3-beta-glucan, a major structural component of the yeast cell wall. Involved in cell wall synthesis, maintenance and remodeling. This chain is 1,3-beta-glucan synthase component FKS1, found in Cryptococcus neoformans var. grubii serotype A (strain H99 / ATCC 208821 / CBS 10515 / FGSC 9487) (Filobasidiella neoformans var. grubii).